The sequence spans 1155 residues: ATP-dependent helicase/deoxyribonuclease subunit B (1155 aa).

One can recognise a UvrD-like helicase ATP-binding domain in the interval 1–278 (MSQLNAYIGR…FTKQERFENR (278 aa)). Position 9 to 16 (9 to 16 (GRAGTGKS)) interacts with ATP. The UvrD-like helicase C-terminal domain occupies 270-584 (TKQERFENRD…SIGSMDLAKV (315 aa)). Residues Cys-785, Cys-1112, Cys-1115, and Cys-1121 each contribute to the [4Fe-4S] cluster site.

It belongs to the helicase family. AddB/RexB type 1 subfamily. As to quaternary structure, heterodimer of AddA and AddB. It depends on Mg(2+) as a cofactor. Requires [4Fe-4S] cluster as cofactor.

Its function is as follows. The heterodimer acts as both an ATP-dependent DNA helicase and an ATP-dependent, dual-direction single-stranded exonuclease. Recognizes the chi site generating a DNA molecule suitable for the initiation of homologous recombination. The AddB subunit has 5' -&gt; 3' nuclease activity but not helicase activity. The sequence is that of ATP-dependent helicase/deoxyribonuclease subunit B from Staphylococcus carnosus (strain TM300).